Reading from the N-terminus, the 862-residue chain is Linoleate 9S-lipoxygenase 1 (862 aa).

One can recognise a PLAT domain in the interval 44-171 (FGAATDIVGG…SYKRDRIFFA (128 aa)). One can recognise a Lipoxygenase domain in the interval 174 to 862 (TYLPNETPAS…FRGIPNSISI (689 aa)). The disordered stretch occupies residues 225-257 (KNLARTTLGGSSDFPYPRRGRTGRKSTRKDPKC). Over residues 242–251 (RRGRTGRKST) the composition is skewed to basic residues. Positions 522, 527, 713, 717, and 862 each coordinate Fe cation.

The protein belongs to the lipoxygenase family. Monomer. Requires Fe cation as cofactor.

The protein resides in the cytoplasm. The catalysed reaction is (9Z,12Z)-octadecadienoate + O2 = (13S)-hydroperoxy-(9Z,11E)-octadecadienoate. It carries out the reaction (9Z,12Z,15Z)-octadecatrienoate + O2 = (13S)-hydroperoxy-(9Z,11E,15Z)-octadecatrienoate. It catalyses the reaction (9Z,12Z)-octadecadienoate + O2 = (9S)-hydroperoxy-(10E,12Z)-octadecadienoate. It participates in lipid metabolism; oxylipin biosynthesis. Plant lipoxygenase may be involved in a number of diverse aspects of plant physiology including growth and development, pest resistance, and senescence or responses to wounding. It catalyzes the hydroperoxidation of lipids containing a cis,cis-1,4-pentadiene structure. The sequence is that of Linoleate 9S-lipoxygenase 1 (LOXA) from Phaseolus vulgaris (Kidney bean).